We begin with the raw amino-acid sequence, 270 residues long: 25S rRNA adenine-N(1) methyltransferase (270 aa).

S-adenosyl-L-methionine contacts are provided by Gly-111 and Asp-131.

It belongs to the BMT2 family.

The protein localises to the nucleus. Its subcellular location is the nucleolus. S-adenosyl-L-methionine-dependent methyltransferase that specifically methylates the N(1) position of an adenine present in helix 65 in 25S rRNA. This is 25S rRNA adenine-N(1) methyltransferase from Schizosaccharomyces pombe (strain 972 / ATCC 24843) (Fission yeast).